The following is a 445-amino-acid chain: MEAAVAPGRDAPAPAASQPSGCGKHNSPERKVYMDYNATTPLEPEVIQAMTKAMWEAWGNPSSPYSAGRKAKDIINAARESLAKMIGGKPQDIIFTSGGTESNNLVIHSVVKHFHANQTSKGHTGGHHSPVKGAKPHFITSSVEHDSIRLPLEHLVEEQVAAVTFVPVSKVSGQAEVDDILAAVRPTTRLVTIMLANNETGIVMPVPEISQRIKALNQERVAAGLPPILVHTDAAQALGKQRVDVEDLGVDFLTIVGHKFYGPRIGALYIRGLGEFTPLYPMLFGGGQERNFRPGTENTPMIAGLGKAAELVTQNCEAYEAHMRDVRDYLEERLEAEFGQKRIHLNSQFPGTQRLPNTCNFSIRGPRLQGHVVLAQCRVLMASVGAACHSDHGDQPSPVLLSYGVPFDVARNALRLSVGRSTTRAEVDLVVQDLKQAVAQLEDQA.

Residue M1 is modified to N-acetylmethionine. The interval 1–28 (MEAAVAPGRDAPAPAASQPSGCGKHNSP) is disordered. Phosphoserine is present on S129. The residue at position 259 (K259) is an N6-(pyridoxal phosphate)lysine. C388 (S-selanylcysteine intermediate) is an active-site residue.

Belongs to the class-V pyridoxal-phosphate-dependent aminotransferase family. Homodimer. It depends on pyridoxal 5'-phosphate as a cofactor.

It localises to the cytoplasm. The protein localises to the cytosol. The enzyme catalyses L-selenocysteine + AH2 = hydrogenselenide + L-alanine + A + H(+). Its function is as follows. Catalyzes the decomposition of L-selenocysteine to L-alanine and elemental selenium. The chain is Selenocysteine lyase (SCLY) from Homo sapiens (Human).